The chain runs to 120 residues: uncharacterized protein (120 aa).

The Nudix hydrolase domain occupies 29-120; the sequence is QRQAAVLVPI…QVTPVVGIIP (92 aa). The Nudix box signature appears at 67–89; it reads GAVDNSDATLIAAALREAQEEVA. Mg(2+)-binding residues include Glu-83 and Glu-87.

This sequence belongs to the Nudix hydrolase family. PCD1 subfamily. It depends on Mn(2+) as a cofactor. The cofactor is Mg(2+).

Functionally, probably mediates the hydrolysis of some nucleoside diphosphate derivatives. This is an uncharacterized protein from Klebsiella aerogenes (Enterobacter aerogenes).